A 120-amino-acid polypeptide reads, in one-letter code: Large ribosomal subunit protein uL18 (120 aa).

Belongs to the universal ribosomal protein uL18 family. As to quaternary structure, part of the 50S ribosomal subunit; part of the 5S rRNA/L5/L18/L25 subcomplex. Contacts the 5S and 23S rRNAs.

In terms of biological role, this is one of the proteins that bind and probably mediate the attachment of the 5S RNA into the large ribosomal subunit, where it forms part of the central protuberance. This is Large ribosomal subunit protein uL18 from Bacillus cereus (strain AH820).